Reading from the N-terminus, the 861-residue chain is Leucine--tRNA ligase (861 aa).

Residues P42–H52 carry the 'HIGH' region motif. Positions K620–S624 match the 'KMSKS' region motif. K623 is an ATP binding site.

It belongs to the class-I aminoacyl-tRNA synthetase family.

It is found in the cytoplasm. The enzyme catalyses tRNA(Leu) + L-leucine + ATP = L-leucyl-tRNA(Leu) + AMP + diphosphate. The polypeptide is Leucine--tRNA ligase (Marinobacter nauticus (strain ATCC 700491 / DSM 11845 / VT8) (Marinobacter aquaeolei)).